The primary structure comprises 127 residues: MRPLDIDEVEAPEEVEVLEPEEDFEQFLLPVINEMREDIASLIREHGRAYLRTRSKLWEMDNMLIQIKTQVEASEESALNHVQHPSGEADERVSELCEKAEEKAKEIAKMAEMLVELVWRIERSESS.

The stretch at 87 to 118 (GEADERVSELCEKAEEKAKEIAKMAEMLVELV) forms a coiled coil.

It belongs to the MORF4 family-associated protein family.

The polypeptide is MORF4 family-associated protein 1-like 1 (MRFAP1L1) (Homo sapiens (Human)).